Reading from the N-terminus, the 419-residue chain is tRNA(Ile)-lysidine synthase (419 aa).

Position 25–30 (25–30 (SGGIDS)) interacts with ATP.

The protein belongs to the tRNA(Ile)-lysidine synthase family.

It localises to the cytoplasm. It carries out the reaction cytidine(34) in tRNA(Ile2) + L-lysine + ATP = lysidine(34) in tRNA(Ile2) + AMP + diphosphate + H(+). Ligates lysine onto the cytidine present at position 34 of the AUA codon-specific tRNA(Ile) that contains the anticodon CAU, in an ATP-dependent manner. Cytidine is converted to lysidine, thus changing the amino acid specificity of the tRNA from methionine to isoleucine. The chain is tRNA(Ile)-lysidine synthase from Actinobacillus pleuropneumoniae serotype 7 (strain AP76).